Here is a 108-residue protein sequence, read N- to C-terminus: Small ribosomal subunit protein uS10 (108 aa).

The protein belongs to the universal ribosomal protein uS10 family. In terms of assembly, part of the 30S ribosomal subunit.

Involved in the binding of tRNA to the ribosomes. The polypeptide is Small ribosomal subunit protein uS10 (Ehrlichia chaffeensis (strain ATCC CRL-10679 / Arkansas)).